A 271-amino-acid polypeptide reads, in one-letter code: Insulin-like growth factor-binding protein 5 (271 aa).

Positions M1–G19 are cleaved as a signal peptide. The IGFBP N-terminal domain maps to S22 to E102. Disulfide bonds link C26–C52, C29–C54, C37–C55, C44–C58, C66–C79, and C73–C99. Basic and acidic residues predominate over residues A109–P121. The segment at A109–E129 is disordered. The residue at position 115 (S115) is a Phosphoserine. The Thyroglobulin type-1 domain occupies Q188–C262. 3 cysteine pairs are disulfide-bonded: C191/C218, C229/C240, and C242/C262.

In terms of assembly, interacts with IGF1; this interaction enhances the growth stimulatory effects of IGF1 on fibroblasts. Interacts with CAV1; this interaction allows trafficking of IGFBP5 from the plasma membrane to the nucleus. Interacts with NCL; this interaction is necessary for IGFBP5 localization to the nucleus.

The protein resides in the secreted. It localises to the cytoplasm. It is found in the nucleus. In terms of biological role, multifunctional protein that plays a critical role in regulating the availability of IGFs to their receptors and thereby regulates IGF-mediated cellular processes including proliferation, differentiation, and apoptosis in a cell-type specific manner. Increases the cell proliferation of osteoblasts, intestinal smooth muscle cells and neuroblastoma cells. Enhances adhesion and survival of epithelial cells but decreases adhesion of mesenchymal cells. Once secreted, acts as a major mediator of mTORC1-dependent feedback inhibition of IGF1 signaling. Also plays a role in the induction of extracellular matrix (ECM) production and deposition independently of its nuclear translocation and binding to IGFs. Acts itself as a growth factor that can act independently of IGFs to regulate bone formation. Acts as a ligand for the ROR1 receptor which triggers formation of ROR1/HER2 heterodimer to enhance CREB oncogenic signaling. This is Insulin-like growth factor-binding protein 5 (IGFBP5) from Bos taurus (Bovine).